A 101-amino-acid chain; its full sequence is MAKKSSVEKNNHRKELVKRFAEKRKALLAIANDESREMEERFEARLKLAELPRNSSATRIRNRCEMTGRPRAYYRKLGISRVALRELGNRGLIPGLVKSSW.

It belongs to the universal ribosomal protein uS14 family. As to quaternary structure, part of the 30S ribosomal subunit. Contacts proteins S3 and S10.

Binds 16S rRNA, required for the assembly of 30S particles and may also be responsible for determining the conformation of the 16S rRNA at the A site. This chain is Small ribosomal subunit protein uS14, found in Methylorubrum populi (strain ATCC BAA-705 / NCIMB 13946 / BJ001) (Methylobacterium populi).